The chain runs to 204 residues: Holliday junction branch migration complex subunit RuvA (204 aa).

The segment at 1–67 (MIAFLSGHLV…ETELVLYGFG (67 aa)) is domain I. A domain II region spans residues 68–146 (SPAERDVFVE…HWRQGLENAD (79 aa)). The segment at 147 to 156 (RPLAGGPPPA) is flexible linker. The interval 156–204 (AIREEVEMALLALGYSLQEIQAALQALPSQPRPTEEWLRDAITYLSRQP) is domain III.

This sequence belongs to the RuvA family. In terms of assembly, homotetramer. Forms an RuvA(8)-RuvB(12)-Holliday junction (HJ) complex. HJ DNA is sandwiched between 2 RuvA tetramers; dsDNA enters through RuvA and exits via RuvB. An RuvB hexamer assembles on each DNA strand where it exits the tetramer. Each RuvB hexamer is contacted by two RuvA subunits (via domain III) on 2 adjacent RuvB subunits; this complex drives branch migration. In the full resolvosome a probable DNA-RuvA(4)-RuvB(12)-RuvC(2) complex forms which resolves the HJ.

Its subcellular location is the cytoplasm. Its function is as follows. The RuvA-RuvB-RuvC complex processes Holliday junction (HJ) DNA during genetic recombination and DNA repair, while the RuvA-RuvB complex plays an important role in the rescue of blocked DNA replication forks via replication fork reversal (RFR). RuvA specifically binds to HJ cruciform DNA, conferring on it an open structure. The RuvB hexamer acts as an ATP-dependent pump, pulling dsDNA into and through the RuvAB complex. HJ branch migration allows RuvC to scan DNA until it finds its consensus sequence, where it cleaves and resolves the cruciform DNA. In Synechococcus sp. (strain JA-3-3Ab) (Cyanobacteria bacterium Yellowstone A-Prime), this protein is Holliday junction branch migration complex subunit RuvA.